Consider the following 215-residue polypeptide: Large ribosomal subunit protein uL4 (215 aa).

Positions 51–88 (KGMGEVSGTTKKPYRQKGTGNARQGSLRAPQFRTGGAV) are disordered.

It belongs to the universal ribosomal protein uL4 family. Part of the 50S ribosomal subunit.

Its function is as follows. One of the primary rRNA binding proteins, this protein initially binds near the 5'-end of the 23S rRNA. It is important during the early stages of 50S assembly. It makes multiple contacts with different domains of the 23S rRNA in the assembled 50S subunit and ribosome. In terms of biological role, forms part of the polypeptide exit tunnel. This is Large ribosomal subunit protein uL4 from Granulibacter bethesdensis (strain ATCC BAA-1260 / CGDNIH1).